Here is a 129-residue protein sequence, read N- to C-terminus: Small ribosomal subunit protein bS18c (129 aa).

The segment at 1-20 (MGTSNTQKPQKQVPKRKKYK) is disordered.

The protein belongs to the bacterial ribosomal protein bS18 family. In terms of assembly, part of the 30S ribosomal subunit.

The protein resides in the plastid. It is found in the chloroplast. The sequence is that of Small ribosomal subunit protein bS18c from Stigeoclonium helveticum (Green alga).